Consider the following 312-residue polypeptide: HPr kinase/phosphorylase (312 aa).

Residues His139 and Lys160 contribute to the active site. An ATP-binding site is contributed by 154–161 (GDSGIGKS). Residue Ser161 coordinates Mg(2+). Asp178 serves as the catalytic Proton acceptor; for phosphorylation activity. Proton donor; for dephosphorylation activity. The important for the catalytic mechanism of both phosphorylation and dephosphorylation stretch occupies residues 202-211 (IEIRGVGIID). A Mg(2+)-binding site is contributed by Glu203. Residue Arg244 is part of the active site. Positions 265 to 270 (PVKTGR) are important for the catalytic mechanism of dephosphorylation.

This sequence belongs to the HPrK/P family. In terms of assembly, homohexamer. The cofactor is Mg(2+).

It carries out the reaction [HPr protein]-L-serine + ATP = [HPr protein]-O-phospho-L-serine + ADP + H(+). The catalysed reaction is [HPr protein]-O-phospho-L-serine + phosphate + H(+) = [HPr protein]-L-serine + diphosphate. Functionally, catalyzes the ATP- as well as the pyrophosphate-dependent phosphorylation of a specific serine residue in HPr, a phosphocarrier protein of the phosphoenolpyruvate-dependent sugar phosphotransferase system (PTS). HprK/P also catalyzes the pyrophosphate-producing, inorganic phosphate-dependent dephosphorylation (phosphorolysis) of seryl-phosphorylated HPr (P-Ser-HPr). The two antagonistic activities of HprK/P are regulated by several intracellular metabolites, which change their concentration in response to the absence or presence of rapidly metabolisable carbon sources (glucose, fructose, etc.) in the growth medium. Therefore, by controlling the phosphorylation state of HPr, HPrK/P is a sensor enzyme that plays a major role in the regulation of carbon metabolism and sugar transport: it mediates carbon catabolite repression (CCR), and regulates PTS-catalyzed carbohydrate uptake and inducer exclusion. This chain is HPr kinase/phosphorylase, found in Streptococcus pneumoniae serotype 4 (strain ATCC BAA-334 / TIGR4).